Reading from the N-terminus, the 814-residue chain is Cellulase/esterase CelE (814 aa).

The first 34 residues, 1 to 34 (MKKIVSLVCVLVMLVSILGSFSVVAASPVKGFQV), serve as a signal peptide directing secretion. The interval 35–354 (SGTKLLDASG…AVFWWDNGYY (320 aa)) is cellulase. The active-site Proton donor; for cellulase activity is the Glu193. Glu316 serves as the catalytic Nucleophile; for cellulase activity. The Dockerin domain maps to 409 to 479 (ANILYGDVNG…LLRSIDKFPA (71 aa)). 12 residues coordinate Ca(2+): Asp415, Asn417, Asp419, Gly420, Lys421, Asp426, Asp451, Val452, Asn453, Asp455, Lys457, and Asp462. The tract at residues 490–814 (PGILYNGRFD…TAEIKNKLGW (325 aa)) is esterase. Catalysis depends on Ser612, which acts as the Nucleophile; for esterase activity.

It in the N-terminal section; belongs to the glycosyl hydrolase 5 (cellulase A) family. In the C-terminal section; belongs to the carbohydrate esterase 2 (CE2) family.

It is found in the secreted. The enzyme catalyses Endohydrolysis of (1-&gt;4)-beta-D-glucosidic linkages in cellulose, lichenin and cereal beta-D-glucans.. It catalyses the reaction Deacetylation of xylans and xylo-oligosaccharides.. The protein operates within glycan metabolism; cellulose degradation. It participates in glycan degradation; xylan degradation. Its activity is regulated as follows. Esterase activity of the CE2 module is inhibited when this domain binds to cellohexaose or beta-glucan. Functionally, multifunctional enzyme involved in the degradation of plant cell wall polysaccharides. Displays endoglucanase activity against carboxymethyl cellulose (CMC) and barley beta-glucan. Also catalyzes the deacetylation of acetylated birchwood xylan and glucomannan, with a preference for the latter, and of the synthetic substrate 4-nitrophenyl acetate (4-NPAc). The chain is Cellulase/esterase CelE from Acetivibrio thermocellus (strain ATCC 27405 / DSM 1237 / JCM 9322 / NBRC 103400 / NCIMB 10682 / NRRL B-4536 / VPI 7372) (Clostridium thermocellum).